Consider the following 192-residue polypeptide: Putative manganese efflux pump MntP (192 aa).

6 consecutive transmembrane segments (helical) span residues 3 to 23, 36 to 56, 65 to 85, 112 to 132, 136 to 156, and 171 to 191; these read FSAI…VAAA, VLLV…IGWL, VQAW…GKML, FVLA…LPML, FAIS…AGLF, and LAGG…HLVL.

Belongs to the MntP (TC 9.B.29) family.

It localises to the cell inner membrane. Its function is as follows. Probably functions as a manganese efflux pump. The polypeptide is Putative manganese efflux pump MntP (Sorangium cellulosum (strain So ce56) (Polyangium cellulosum (strain So ce56))).